A 151-amino-acid chain; its full sequence is Major latex allergen Hev b 5 (151 aa).

A disordered region spans residues 1–151 (MASVEVESAA…TEVPVEKTEE (151 aa)). Residue Ala2 is modified to N-acetylalanine. The span at 17–31 (ETPEVTKAEETKTEE) shows a compositional bias: basic and acidic residues. Composition is skewed to low complexity over residues 36–45 (PASEQETADA) and 53–64 (TAAPAEPEAPAP). Basic and acidic residues-rich tracts occupy residues 65-80 (ETEK…KTEE), 103-113 (EEPKHETKETE), and 122-133 (EGEKPAEEEKPI). Residues 134 to 144 (TEAAETATTEV) are compositionally biased toward low complexity.

It to kiwi fruit protein PKIWI501. In terms of processing, the N-terminus is blocked.

In Hevea brasiliensis (Para rubber tree), this protein is Major latex allergen Hev b 5.